The chain runs to 194 residues: Ribonuclease HII (194 aa).

The 191-residue stretch at 3–193 (ILTAGVDEAG…VRNLLAQQAL (191 aa)) folds into the RNase H type-2 domain. The a divalent metal cation site is built by D9, E10, and D101.

It belongs to the RNase HII family. Mn(2+) serves as cofactor. It depends on Mg(2+) as a cofactor.

The protein localises to the cytoplasm. The enzyme catalyses Endonucleolytic cleavage to 5'-phosphomonoester.. In terms of biological role, endonuclease that specifically degrades the RNA of RNA-DNA hybrids. In Neisseria gonorrhoeae (strain ATCC 700825 / FA 1090), this protein is Ribonuclease HII.